The primary structure comprises 149 residues: FKBP-type 16 kDa peptidyl-prolyl cis-trans isomerase (149 aa).

The PPIase FKBP-type domain occupies 2-72 (SESVQSNSAV…FSLEPDAAFG (71 aa)).

Belongs to the FKBP-type PPIase family.

It catalyses the reaction [protein]-peptidylproline (omega=180) = [protein]-peptidylproline (omega=0). In terms of biological role, PPIases accelerate the folding of proteins. Substrate specificity carried out with 'Suc-Ala-Xaa-Pro-Phe-4-nitroanilide', where Xaa is the amino acid tested, was found to be Phe &gt; Leu &gt;&gt; Ile &gt; Lys = Ala &gt; Trp &gt; His &gt;&gt; Gln. The sequence is that of FKBP-type 16 kDa peptidyl-prolyl cis-trans isomerase (fkpB) from Escherichia coli O6:H1 (strain CFT073 / ATCC 700928 / UPEC).